The primary structure comprises 429 residues: Histidine--tRNA ligase (429 aa).

This sequence belongs to the class-II aminoacyl-tRNA synthetase family. In terms of assembly, homodimer.

It is found in the cytoplasm. It carries out the reaction tRNA(His) + L-histidine + ATP = L-histidyl-tRNA(His) + AMP + diphosphate + H(+). This Chlorobium phaeobacteroides (strain DSM 266 / SMG 266 / 2430) protein is Histidine--tRNA ligase.